The primary structure comprises 66 residues: MPKLKTKSGVKKRFKMTATGKLKAGVAGKRHRLISHNGKYIRQNRGTKVMSEADAKIIKSWLPYGL.

Belongs to the bacterial ribosomal protein bL35 family.

This chain is Large ribosomal subunit protein bL35, found in Phenylobacterium zucineum (strain HLK1).